The sequence spans 143 residues: P840 reaction center 17 kDa protein (143 aa).

Residues 1 to 23 (MQPQLSRPQTATNQVRNSVSGPW) show a composition bias toward polar residues. The tract at residues 1 to 25 (MQPQLSRPQTATNQVRNSVSGPWSG) is disordered.

In terms of assembly, component of the P840 reaction center.

The polypeptide is P840 reaction center 17 kDa protein (pscD) (Chlorobaculum thiosulfatiphilum (Chlorobium limicola f.sp. thiosulfatophilum)).